The sequence spans 132 residues: UPF0251 protein PTH_0588 (132 aa).

Belongs to the UPF0251 family.

The chain is UPF0251 protein PTH_0588 from Pelotomaculum thermopropionicum (strain DSM 13744 / JCM 10971 / SI).